Here is a 632-residue protein sequence, read N- to C-terminus: Phosphomethylpyrimidine synthase (632 aa).

The segment covering 1 to 13 (MNIRSNPDTTLPA) has biased composition (polar residues). The interval 1–26 (MNIRSNPDTTLPAVTTGPLPSSRKIF) is disordered. Substrate contacts are provided by residues asparagine 221, methionine 250, tyrosine 279, histidine 315, 335–337 (SRG), 376–379 (DGLR), and glutamate 415. A Zn(2+)-binding site is contributed by histidine 419. Position 442 (tyrosine 442) interacts with substrate. Histidine 483 is a Zn(2+) binding site. [4Fe-4S] cluster is bound by residues cysteine 563, cysteine 566, and cysteine 571.

This sequence belongs to the ThiC family. Homodimer. [4Fe-4S] cluster is required as a cofactor.

It catalyses the reaction 5-amino-1-(5-phospho-beta-D-ribosyl)imidazole + S-adenosyl-L-methionine = 4-amino-2-methyl-5-(phosphooxymethyl)pyrimidine + CO + 5'-deoxyadenosine + formate + L-methionine + 3 H(+). The protein operates within cofactor biosynthesis; thiamine diphosphate biosynthesis. In terms of biological role, catalyzes the synthesis of the hydroxymethylpyrimidine phosphate (HMP-P) moiety of thiamine from aminoimidazole ribotide (AIR) in a radical S-adenosyl-L-methionine (SAM)-dependent reaction. In Afipia carboxidovorans (strain ATCC 49405 / DSM 1227 / KCTC 32145 / OM5) (Oligotropha carboxidovorans), this protein is Phosphomethylpyrimidine synthase.